Reading from the N-terminus, the 362-residue chain is Formyltransferase/hydrolase complex Fhc subunit B (362 aa).

As to quaternary structure, octaheteromer. Part of the formyltransferase/hydrolase complex fhc; composed of FhcA, FhcB, FhcC and FhcD.

The protein localises to the cytoplasm. It functions in the pathway one-carbon metabolism; formaldehyde degradation; formate from formaldehyde (H(4)MPT route): step 4/5. Involved in the transformation of 5-formyl tetrahydromethanopterin (5-formyl-H(4)MPT) to methanofuran (MFR) and formate via the formylmethanofuran (formyl-MFR). In Methylorubrum extorquens (strain ATCC 14718 / DSM 1338 / JCM 2805 / NCIMB 9133 / AM1) (Methylobacterium extorquens), this protein is Formyltransferase/hydrolase complex Fhc subunit B (fhcB).